We begin with the raw amino-acid sequence, 43 residues long: Myotoxin-1 (43 aa).

Cystine bridges form between Cys-4-Cys-36, Cys-11-Cys-30, and Cys-18-Cys-37.

It belongs to the crotamine-myotoxin family. As to quaternary structure, monomer. As to expression, expressed by the venom gland.

The protein resides in the secreted. Functionally, cationic peptide that possesses multiple functions. It acts as a cell-penetrating peptide (CPP), and as a potent voltage-gated potassium channel (Kv) inhibitor. It exhibits antimicrobial activities, hind limb paralysis, and severe muscle necrosis by a non-enzymatic mechanism. The sequence is that of Myotoxin-1 from Crotalus concolor (Midget faded rattlesnake).